The primary structure comprises 383 residues: Xylose/arabinose import ATP-binding protein XacK (383 aa).

One can recognise an ABC transporter domain in the interval 4-240 (LTLDDVTKVY…PNNLFVAGFI (237 aa)). 41-48 (GPSGCGKS) contacts ATP.

Belongs to the ABC transporter superfamily. Carbohydrate uptake transporter-1 (CUT1) (TC 3.A.1.1) family. In terms of assembly, the complex is composed of two ATP-binding proteins (XacJ and XacK), two transmembrane proteins (XacH and XacI) and a solute-binding protein (XacG).

Its subcellular location is the cell membrane. It carries out the reaction D-xylose(out) + ATP + H2O = D-xylose(in) + ADP + phosphate + H(+). The catalysed reaction is L-arabinose(out) + ATP + H2O = L-arabinose(in) + ADP + phosphate + H(+). Functionally, part of the ABC transporter complex XacGHIJK involved in the uptake of xylose and arabinose. Responsible for energy coupling to the transport system. The protein is Xylose/arabinose import ATP-binding protein XacK of Haloferax volcanii (strain ATCC 29605 / DSM 3757 / JCM 8879 / NBRC 14742 / NCIMB 2012 / VKM B-1768 / DS2) (Halobacterium volcanii).